A 99-amino-acid chain; its full sequence is Transposase InsE for insertion sequence IS3A (99 aa).

Residues methionine 1–serine 21 form a disordered region.

The protein belongs to the transposase 8 family.

Its function is as follows. Involved in the transposition of the insertion sequence IS3. The chain is Transposase InsE for insertion sequence IS3A (insE1) from Escherichia coli (strain K12).